The chain runs to 602 residues: Elongation factor 4 (602 aa).

Residues 7–189 (RKIRNFSIIA…AIVKNIPPPT (183 aa)) enclose the tr-type G domain. GTP is bound by residues 19 to 24 (DHGKST) and 136 to 139 (NKID).

The protein belongs to the TRAFAC class translation factor GTPase superfamily. Classic translation factor GTPase family. LepA subfamily.

The protein localises to the cell membrane. It carries out the reaction GTP + H2O = GDP + phosphate + H(+). Its function is as follows. Required for accurate and efficient protein synthesis under certain stress conditions. May act as a fidelity factor of the translation reaction, by catalyzing a one-codon backward translocation of tRNAs on improperly translocated ribosomes. Back-translocation proceeds from a post-translocation (POST) complex to a pre-translocation (PRE) complex, thus giving elongation factor G a second chance to translocate the tRNAs correctly. Binds to ribosomes in a GTP-dependent manner. The sequence is that of Elongation factor 4 from Alkaliphilus metalliredigens (strain QYMF).